A 215-amino-acid chain; its full sequence is LexA repressor (215 aa).

The segment at residues 28–48 (RAEIAAELGFSSPNAAEEHLR) is a DNA-binding region (H-T-H motif). Residues Ser-133 and Lys-170 each act as for autocatalytic cleavage activity in the active site.

It belongs to the peptidase S24 family. Homodimer.

It carries out the reaction Hydrolysis of Ala-|-Gly bond in repressor LexA.. Its function is as follows. Represses a number of genes involved in the response to DNA damage (SOS response), including recA and lexA. In the presence of single-stranded DNA, RecA interacts with LexA causing an autocatalytic cleavage which disrupts the DNA-binding part of LexA, leading to derepression of the SOS regulon and eventually DNA repair. This is LexA repressor from Burkholderia ambifaria (strain MC40-6).